Here is a 684-residue protein sequence, read N- to C-terminus: Amino-acid acetyltransferase, mitochondrial (684 aa).

Residues 414–439 (PQDATNSASEPRDPSQLSTVATRRKR) are disordered. Positions 415 to 434 (QDATNSASEPRDPSQLSTVA) are enriched in polar residues. The N-acetyltransferase domain occupies 505–674 (GKSRMTLNDP…YEGVCRGIEP (170 aa)).

The protein belongs to the acetyltransferase family.

It localises to the mitochondrion. The catalysed reaction is L-glutamate + acetyl-CoA = N-acetyl-L-glutamate + CoA + H(+). The protein operates within amino-acid biosynthesis; L-arginine biosynthesis; N(2)-acetyl-L-ornithine from L-glutamate: step 1/4. N-acetylglutamate synthase involved in arginine biosynthesis. The polypeptide is Amino-acid acetyltransferase, mitochondrial (ARG2) (Ajellomyces capsulatus (strain NAm1 / WU24) (Darling's disease fungus)).